Reading from the N-terminus, the 225-residue chain is MASPSSLCLLTALLALVSWQTIASDPSPLQDFCVADEHSPVLVNGFACLDPKHVNADHFFKAAMLDTPRKTNKVGSNVTLINVMQIPGLNTLGISIARIDYAPLGQNPPHTHPRATEILTVLEGTLYVGFVTSNPNNTLFSKVLKKGDVFVFPVGLIHFQFNPNPHQPAVAIAALSSQNPGAITIANAVFGSKPPISDEVLAKAFQVEKGTIDWLQAQFWENNHY.

An N-terminal signal peptide occupies residues 1–23 (MASPSSLCLLTALLALVSWQTIA). A disulfide bridge connects residues Cys33 and Cys48. Positions 63-213 (AMLDTPRKTN…AFQVEKGTID (151 aa)) constitute a Cupin type-1 domain. Asn77 carries an N-linked (GlcNAc...) asparagine glycan. Mn(2+) is bound by residues His110, His112, and Glu117. Asn136 carries N-linked (GlcNAc...) asparagine glycosylation. Position 158 (His158) interacts with Mn(2+).

It belongs to the germin family. In terms of assembly, oligomer (believed to be a pentamer but probably hexamer).

The protein resides in the secreted. It is found in the extracellular space. Its subcellular location is the apoplast. Functionally, plays a role in broad-spectrum disease resistance. Probably has no oxalate oxidase activity even if the active site is conserved. In Oryza sativa subsp. japonica (Rice), this protein is Germin-like protein 8-6.